Here is a 421-residue protein sequence, read N- to C-terminus: tRNA (guanine(37)-N(1))-methyltransferase (421 aa).

S-adenosyl-L-methionine is bound by residues Arg198, 242–243 (DL), 270–271 (DA), and Asn293.

Belongs to the class I-like SAM-binding methyltransferase superfamily. TRM5/TYW2 family. As to quaternary structure, monomer.

It localises to the mitochondrion matrix. Its subcellular location is the nucleus. The protein resides in the cytoplasm. It catalyses the reaction guanosine(37) in tRNA + S-adenosyl-L-methionine = N(1)-methylguanosine(37) in tRNA + S-adenosyl-L-homocysteine + H(+). Specifically methylates the N1 position of guanosine-37 in various cytoplasmic and mitochondrial tRNAs. Methylation is not dependent on the nature of the nucleoside 5' of the target nucleoside. This is the first step in the biosynthesis of wybutosine (yW), a modified base adjacent to the anticodon of tRNAs and required for accurate decoding. This Paramecium tetraurelia protein is tRNA (guanine(37)-N(1))-methyltransferase.